Consider the following 299-residue polypeptide: Taste receptor type 2 member 50 (299 aa).

A topological domain (extracellular) is located at residue methionine 1. Residues 2 to 22 (ITFLYIFFSILILVLFVLGNF) traverse the membrane as a helical segment. Over 23–55 (ANGFIALVNFIDWVKRKKISSADQILTALAVSR) the chain is Cytoplasmic. Residues 56 to 76 (IGLLWALLLNWYLTVLNPAFY) traverse the membrane as a helical segment. Residues 77–87 (SVELRITSYNA) lie on the Extracellular side of the membrane. The chain crosses the membrane as a helical span at residues 88 to 108 (WVVTNHFSMWLAASLSIFYLL). Residues 109 to 126 (KIANFSNLIFLHLKRRVR) lie on the Cytoplasmic side of the membrane. Residues 127 to 147 (SVILVILLGTLIFLVCHLLVA) traverse the membrane as a helical segment. Over 148–181 (NMDESMWAEEYEGNMTGKMKLRNTVHLSYLTVTT) the chain is Extracellular. Residue asparagine 161 is glycosylated (N-linked (GlcNAc...) asparagine). The chain crosses the membrane as a helical span at residues 182 to 202 (LWSFIPFTLSLISFLMLICSL). Over 203–229 (CKHLKKMQLHGEGSQDLSTKVHIKALQ) the chain is Cytoplasmic. Residues 230 to 250 (TLISFLLLCAIFFLFLIISVW) form a helical membrane-spanning segment. The Extracellular portion of the chain corresponds to 251 to 259 (SPRRLQNDP). The chain crosses the membrane as a helical span at residues 260 to 280 (VVMVSKAVGNIYLAFDSFILI). Over 281–299 (WRTKKLKHTFLLILCQIRC) the chain is Cytoplasmic.

Belongs to the G-protein coupled receptor T2R family.

Its subcellular location is the membrane. Its function is as follows. Receptor that may play a role in the perception of bitterness and is gustducin-linked. May play a role in sensing the chemical composition of the gastrointestinal content. The activity of this receptor may stimulate alpha gustducin, mediate PLC-beta-2 activation and lead to the gating of TRPM5. The polypeptide is Taste receptor type 2 member 50 (TAS2R50) (Gorilla gorilla gorilla (Western lowland gorilla)).